Here is a 334-residue protein sequence, read N- to C-terminus: Protein FAM50B (334 aa).

An N-acetylalanine modification is found at Ala2. The interval 122-175 is disordered; sequence FTLDEEEGDQEDSRQAESAEAHSAGAKKNLGKNPDVDTSFLPDREREEEENRLR. 2 stretches are compositionally biased toward basic and acidic residues: residues 132-141 and 163-175; these read EDSRQAESAE and PDRE…NRLR.

Belongs to the FAM50 family. Widely expressed. Abundant in testis, where it is expressed in seminiferous tubules, not in the interstitium. At the cellular level, expressed in primary spermatocytes and round spermatids, but not detectable in spermatogonia, elongating spermatids, mature spermatozoa, Sertoli cells or Leydig cells.

The sequence is that of Protein FAM50B (Fam50b) from Mus musculus (Mouse).